The primary structure comprises 340 residues: Entry-fusion complex protein OPG094 (340 aa).

A disordered region spans residues 1-20; the sequence is MGGGVSVELPKRDPPPGVPT. A lipid anchor (N-myristoyl glycine; by host) is attached at Gly-2. The Virion surface portion of the chain corresponds to 2 to 319; the sequence is GGGVSVELPK…VQHNIKHSFD (318 aa). The chain crosses the membrane as a helical; Signal-anchor for type II membrane protein span at residues 320–340; that stretch reads LKLHLISLLSLLVIWILIVAI.

Belongs to the orthopoxvirus OPG086 family. As to quaternary structure, interacts with OPG143. Component of the entry fusion complex (EFC) composed of OPG053, OPG076, OPG086, OPG094, OPG095, OPG099, OPG107, OPG143, OPG104, OPG147 and OPG155. Except for OPG095 and OPG053, each of the EFC proteins is required for assembly or stability of the complex. Unglycosylated because produced in viral factories instead of the classic ER -Golgi route.

Its subcellular location is the virion membrane. Component of the entry fusion complex (EFC), which consists of 11 proteins. During cell infection, this complex mediates entry of the virion core into the host cytoplasm by a two-step mechanism consisting of lipid mixing of the viral and cellular membranes and subsequent pore formation. The chain is Entry-fusion complex protein OPG094 (OPG094) from Homo sapiens (Human).